Consider the following 548-residue polypeptide: Chaperonin GroEL (548 aa).

ATP contacts are provided by residues 29 to 32 (TMGP), lysine 50, 86 to 90 (DGTTT), glycine 414, 478 to 480 (NAA), and aspartate 494.

This sequence belongs to the chaperonin (HSP60) family. Forms a cylinder of 14 subunits composed of two heptameric rings stacked back-to-back. Interacts with the co-chaperonin GroES.

The protein localises to the cytoplasm. It carries out the reaction ATP + H2O + a folded polypeptide = ADP + phosphate + an unfolded polypeptide.. Its function is as follows. Together with its co-chaperonin GroES, plays an essential role in assisting protein folding. The GroEL-GroES system forms a nano-cage that allows encapsulation of the non-native substrate proteins and provides a physical environment optimized to promote and accelerate protein folding. This Legionella pneumophila (strain Paris) protein is Chaperonin GroEL.